The primary structure comprises 220 residues: GTP cyclohydrolase 1 (220 aa).

3 residues coordinate Zn(2+): Cys109, His112, and Cys180.

Belongs to the GTP cyclohydrolase I family. As to quaternary structure, homomer.

It catalyses the reaction GTP + H2O = 7,8-dihydroneopterin 3'-triphosphate + formate + H(+). It participates in cofactor biosynthesis; 7,8-dihydroneopterin triphosphate biosynthesis; 7,8-dihydroneopterin triphosphate from GTP: step 1/1. This chain is GTP cyclohydrolase 1, found in Edwardsiella ictaluri (strain 93-146).